Consider the following 338-residue polypeptide: Photosystem II assembly lipoprotein Ycf48 (338 aa).

An N-terminal signal peptide occupies residues 1-23 (MKKIITSFPNLLLSILLCFVLSS). Cys24 is lipidated: N-palmitoyl cysteine. A lipid anchor (S-diacylglycerol cysteine) is attached at Cys24.

Belongs to the Ycf48 family. Part of early PSII assembly complexes which includes D1 (psbA) and PsbI; not found in mature PSII. Binds to the lumenal side of PSII complexes. Interacts with YidC.

The protein localises to the cellular thylakoid membrane. Functionally, a factor required for optimal assembly of photosystem II (PSII), acting in the early stages of PSII assembly. Also plays a role in replacement of photodamaged D1 (psbA). Assists YidC in synthesis of chlorophyll-binding proteins. The protein is Photosystem II assembly lipoprotein Ycf48 of Prochlorococcus marinus (strain MIT 9312).